We begin with the raw amino-acid sequence, 638 residues long: 9-cis-epoxycarotenoid dioxygenase NCED1, chloroplastic (638 aa).

Residues 1 to 80 constitute a chloroplast transit peptide; the sequence is MQRICPAHCS…QTEQEDEQLV (80 aa). 3 stretches are compositionally biased toward low complexity: residues 28–37, 44–69, and 92–102; these read AASAAPQSPS, ASAA…TRTP, and TTNGRAAPSQS. Disordered regions lie at residues 28-80 and 92-113; these read AASA…EQLV and TTNG…PAAA. The Fe cation site is built by H331, H380, H446, and H624.

The protein belongs to the carotenoid oxygenase family. Requires Fe(2+) as cofactor.

It is found in the plastid. Its subcellular location is the chloroplast. It catalyses the reaction a 9-cis-epoxycarotenoid + O2 = a 12'-apo-carotenal + 2-cis,4-trans-xanthoxin. The enzyme catalyses 9-cis-violaxanthin + O2 = (3S,5R,6S)-5,6-epoxy-3-hydroxy-5,6-dihydro-12'-apo-beta-caroten-12'-al + 2-cis,4-trans-xanthoxin. The catalysed reaction is 9'-cis-neoxanthin + O2 = (3S,5R,6R)-3,5-dihydroxy-6,7-didehydro-5,6-dihydro-12'-apo-beta-caroten-12'-al + 2-cis,4-trans-xanthoxin. Has a 11,12(11',12') 9-cis epoxycarotenoid cleavage activity. Catalyzes the first step of abscisic-acid biosynthesis from carotenoids. This chain is 9-cis-epoxycarotenoid dioxygenase NCED1, chloroplastic, found in Oryza sativa subsp. japonica (Rice).